The following is a 301-amino-acid chain: Acetylglutamate kinase (301 aa).

Substrate contacts are provided by residues 64 to 65, Arg-86, and Asn-181; that span reads GG.

The protein belongs to the acetylglutamate kinase family. ArgB subfamily.

The protein localises to the cytoplasm. The enzyme catalyses N-acetyl-L-glutamate + ATP = N-acetyl-L-glutamyl 5-phosphate + ADP. Its pathway is amino-acid biosynthesis; L-arginine biosynthesis; N(2)-acetyl-L-ornithine from L-glutamate: step 2/4. In terms of biological role, catalyzes the ATP-dependent phosphorylation of N-acetyl-L-glutamate. This is Acetylglutamate kinase from Aliarcobacter butzleri (strain RM4018) (Arcobacter butzleri).